The primary structure comprises 1079 residues: Electrogenic sodium bicarbonate cotransporter 1 (1079 aa).

The required for interaction with AHCYL1 stretch occupies residues 1–62 (MEDEAALDRG…EKKEKERVSE (62 aa)). At 1–466 (MEDEAALDRG…FASDFYDALN (466 aa)) the chain is on the cytoplasmic side. Tyr30 is subject to Phosphotyrosine. The segment covering 39-52 (YRRRRRHKRKAGHR) has biased composition (basic residues). A disordered region spans residues 39–78 (YRRRRRHKRKAGHREKKEKERVSENYSDKSDVENADESSS). A compositionally biased stretch (basic and acidic residues) spans 53–70 (EKKEKERVSENYSDKSDV). Phosphoserine occurs at positions 61, 65, 68, 223, 232, 233, and 245. The disordered stretch occupies residues 238–265 (FTSPENGSPAMTHRNLTSSSLNDISDKP). Phosphothreonine is present on residues Thr249 and Thr254. Polar residues predominate over residues 251-260 (RNLTSSSLND). 3 positions are modified to phosphoserine: Ser256, Ser257, and Ser262. The helical transmembrane segment at 467–491 (IQALSAILFIYLATVTNAITFGGLL) threads the bilayer. Residues 492–501 (GDATDNMQGV) are Extracellular-facing. The chain crosses the membrane as a helical span at residues 502–520 (LESFLGTAVSGAVFCLFAG). A topological domain (cytoplasmic) is located at residue Gln521. A discontinuously helical membrane pass occupies residues 522–542 (PLTILSSTGPVLVFERLLFNF). Residues 543–550 (SKDHNFDY) lie on the Extracellular side of the membrane. Residues 551 to 571 (LEFRLWIGLWSAFLCLILVAT) traverse the membrane as a helical segment. The Cytoplasmic portion of the chain corresponds to 572-585 (DASFLVQYFTRFTE). A helical transmembrane segment spans residues 586–609 (EGFSSLISFIFIYDAFKKMIKLAD). Residues 610 to 692 (YYPINSNFKV…GNNCDFVPDI (83 aa)) lie on the Extracellular side of the membrane. Residues 693–710 (TLMSFILFLGTYTSSMAL) form a helical membrane-spanning segment. The Cytoplasmic portion of the chain corresponds to 711 to 725 (KKFKTSRYFPTTARK). A helical membrane pass occupies residues 726–745 (LISDFAIILSILIFCVIDAL). Over 746-779 (VGVDTPKLIVPSEFKPTSPNRGWFVPPFGGNPWW) the chain is Extracellular. An interaction with CA4 region spans residues 748–779 (VDTPKLIVPSEFKPTSPNRGWFVPPFGGNPWW). A helical membrane pass occupies residues 780–807 (VYLAAAIPALLVTILIFMDQQITAVIVN). The Cytoplasmic portion of the chain corresponds to 808–819 (RKEHKLKKGAGY). Residues 820–836 (HLDLFWVAILMVVCSFM) traverse the membrane as a helical segment. A topological domain (extracellular) is located at residue Ala837. The discontinuously helical transmembrane segment at 838 to 855 (LPWYVAATVISIAHIDSL) threads the bilayer. Over 856–877 (KMETETSAPGEQPKFLGVREQR) the chain is Cytoplasmic. Residues 878–894 (VTGTLVFILTGLSVFMA) traverse the membrane as a helical segment. Topologically, residues 895 to 901 (PILKFIP) are extracellular. A helical membrane pass occupies residues 902-918 (MPVLYGVFLYMGVASLN). The Cytoplasmic portion of the chain corresponds to 919 to 960 (GVQFMDRLKLLLMPLKHQPDFIYLRHVPLRRVHLFTFLQVLC). Residues 961–986 (LALLWILKSTVAAIIFPVMILALVAV) constitute an intramembrane region (discontinuously helical). Topologically, residues 987–1079 (RKGMDYLFSQ…PTFLERHTSC (93 aa)) are cytoplasmic. Positions 1002–1004 (LDD) are CA2-binding. Residues 1012–1079 (KKKEDEKKKK…PTFLERHTSC (68 aa)) are disordered. A Phosphoserine; by PKA modification is found at Ser1026. Ser1029 carries the phosphoserine modification. Residues 1030–1033 (DSDD) are CA2-binding. Phosphoserine is present on residues Ser1034 and Ser1044. The segment at 1057–1059 (FLS) is required for basolateral targeting. Positions 1062 to 1079 (KPSDRERSPTFLERHTSC) are enriched in basic and acidic residues. Ser1069 carries the phosphoserine modification.

This sequence belongs to the anion exchanger (TC 2.A.31) family. Homodimer. Interacts with CA2/carbonic anhydrase 2 and CA4/carbonic anhydrase 4 which may regulate transporter activity. Isoform 1 but not isoform 2 interacts with AHCYL1 (via PEST domain when phosphorylated); the interaction increases SLC4A4 isoform 1 activity. Interacts with AHCYL2. Phosphorylation of Ser-1026 by PKA increases the binding of CA2 and changes the Na(+):HCO3(-) stoichiometry of the transporter from 3:1 to 2:1. Phosphorylated in presence of STK39 and dephosphorylated in presence of PP1 phosphatase; phosphorylation seems to inhibit SLC4A4 activity. In terms of processing, N-glycosylated. May not be necessary for the transporter basic functions. As to expression, expressed in vas deferens epithelia (at protein level).

It is found in the basolateral cell membrane. It localises to the cell membrane. The enzyme catalyses 2 hydrogencarbonate(out) + Na(+)(out) = 2 hydrogencarbonate(in) + Na(+)(in). It carries out the reaction 3 hydrogencarbonate(out) + Na(+)(out) = 3 hydrogencarbonate(in) + Na(+)(in). Functionally, electrogenic sodium/bicarbonate cotransporter with a Na(+):HCO3(-) stoichiometry varying from 1:2 to 1:3. May regulate bicarbonate influx/efflux at the basolateral membrane of cells and regulate intracellular pH. The chain is Electrogenic sodium bicarbonate cotransporter 1 (SLC4A4) from Sus scrofa (Pig).